The chain runs to 220 residues: Iron-sulfur cluster repair protein YtfE (220 aa).

It belongs to the RIC family. YtfE subfamily. Homodimer.

It is found in the cytoplasm. Di-iron-containing protein involved in the repair of iron-sulfur clusters damaged by oxidative and nitrosative stress conditions. This Salmonella typhimurium (strain LT2 / SGSC1412 / ATCC 700720) protein is Iron-sulfur cluster repair protein YtfE.